The chain runs to 421 residues: Atrochrysone carboxyl ACP thioesterase (421 aa).

Histidine 207, histidine 209, aspartate 211, and histidine 212 together coordinate Zn(2+). Aspartate 211 functions as the Proton donor/acceptor in the catalytic mechanism.

Belongs to the metallo-beta-lactamase superfamily. It depends on Zn(2+) as a cofactor. In terms of tissue distribution, specifically expressed in conidia.

The enzyme catalyses atrochrysone carboxyl-[ACP] + H2O = atrochrysone carboxylate + holo-[ACP] + H(+). It functions in the pathway secondary metabolite biosynthesis. In terms of biological role, atrochrysone carboxyl ACP thioesterase; part of the gene cluster that mediates the biosynthesis of trypacidin, a mycotoxin with antiprotozoal activity and that plays a role in the infection process. The pathway begins with the synthesis of atrochrysone thioester by the polyketide synthase (PKS) tpcC. The atrochrysone carboxyl ACP thioesterase tpcB then breaks the thioester bond and releases the atrochrysone carboxylic acid from tpcC. The decarboxylase tpcK converts atrochrysone carboxylic acid to atrochrysone which is further reduced into emodin anthrone. The next step is performed by the emodin anthrone oxygenase tpcL that catalyzes the oxidation of emodin anthrone to emodin. Emodin O-methyltransferase encoded by tpcA catalyzes methylation of the 8-hydroxy group of emodin to form questin. Ring cleavage of questin by questin oxidase tpcI leads to desmethylsulochrin via several intermediates including questin epoxide. Another methylation step catalyzed by tpcM leads to the formation of sulochrin which is further converted to monomethylsulfochrin by tpcH. Finally, the tpcJ catalyzes the conversion of monomethylsulfochrin to trypacidin. Trypacidin is toxic for human pulmonary and bronchial epithelial cells by initiating the intracellular formation of nitric oxide (NO) and hydrogen peroxide (H(2)O(2)), thus triggering host necrotic cell death. The trypacidin pathway is also able to produce endocrocin via a distinct route from the endocrocin Enc pathway. In Aspergillus fumigatus (strain ATCC MYA-4609 / CBS 101355 / FGSC A1100 / Af293) (Neosartorya fumigata), this protein is Atrochrysone carboxyl ACP thioesterase.